The chain runs to 51 residues: UPF0320 protein YOL166W-A (51 aa).

Belongs to the UPF0320 family.

The polypeptide is UPF0320 protein YOL166W-A (Saccharomyces cerevisiae (strain ATCC 204508 / S288c) (Baker's yeast)).